Here is an 801-residue protein sequence, read N- to C-terminus: Ferredoxin:CoB-CoM heterodisulfide reductase subunit A (801 aa).

149–172 serves as a coordination point for FAD; it reads GGGIAGITAALNLADNGVSTVLVE. 4Fe-4S ferredoxin-type domains are found at residues 239-269 and 285-320; these read KKPRYVKDSCTACGRCSRVCPVQVEDEFNCG and PKIYCIDPDYCLQLNGEACGKCADACKNEAIDFSQK. The [4Fe-4S] cluster site is built by cysteine 248, cysteine 251, cysteine 254, cysteine 258, cysteine 295, cysteine 303, cysteine 306, and cysteine 310. The tract at residues 382–409 is disordered; that stretch reads FSKASSDPTPATCDSRCEDSSDESQGTD. 4Fe-4S ferredoxin-type domains lie at 606-634 and 635-664; these read EIATINQLLCTRCGECLKCPFDALSVNES and GRVVLDPLICTGCGYCTKLCGEGAVQIAGF. 8 residues coordinate [4Fe-4S] cluster: cysteine 615, cysteine 618, cysteine 621, cysteine 624, cysteine 644, cysteine 647, cysteine 650, and cysteine 654.

Belongs to the HdrA family. The ferredoxin:CoB-CoM heterodisulfide reductase is composed of three subunits; HdrA1, HdrB1 and HdrC1. It depends on [4Fe-4S] cluster as a cofactor. Requires FAD as cofactor.

It is found in the cytoplasm. The enzyme catalyses coenzyme B + coenzyme M + 2 oxidized [2Fe-2S]-[ferredoxin] = coenzyme M-coenzyme B heterodisulfide + 2 reduced [2Fe-2S]-[ferredoxin] + 2 H(+). It participates in cofactor metabolism; coenzyme M-coenzyme B heterodisulfide reduction; coenzyme B and coenzyme M from coenzyme M-coenzyme B heterodisulfide: step 1/1. In terms of biological role, part of a complex that catalyzes the reversible reduction of CoM-S-S-CoB to the thiol-coenzymes H-S-CoM (coenzyme M) and H-S-CoB (coenzyme B). Probably involved in methylotrophic methanogenesis but not in aceticlastic methanogenesis. The protein is Ferredoxin:CoB-CoM heterodisulfide reductase subunit A of Methanosarcina acetivorans (strain ATCC 35395 / DSM 2834 / JCM 12185 / C2A).